The following is a 214-amino-acid chain: Threonylcarbamoyl-AMP synthase (214 aa).

Positions 9-214 (TDSVIQAAHW…GDALTGQIIR (206 aa)) constitute a YrdC-like domain.

The protein belongs to the SUA5 family. TsaC subfamily.

It localises to the cytoplasm. The enzyme catalyses L-threonine + hydrogencarbonate + ATP = L-threonylcarbamoyladenylate + diphosphate + H2O. In terms of biological role, required for the formation of a threonylcarbamoyl group on adenosine at position 37 (t(6)A37) in tRNAs that read codons beginning with adenine. Catalyzes the conversion of L-threonine, HCO(3)(-)/CO(2) and ATP to give threonylcarbamoyl-AMP (TC-AMP) as the acyladenylate intermediate, with the release of diphosphate. The protein is Threonylcarbamoyl-AMP synthase of Psychrobacter arcticus (strain DSM 17307 / VKM B-2377 / 273-4).